A 662-amino-acid chain; its full sequence is UvrABC system protein B (662 aa).

In terms of domain architecture, Helicase ATP-binding spans 31–188; sequence DNIEGGEKAQ…NDLVDIQFER (158 aa). Residue 44–51 coordinates ATP; sequence GATGTGKT. Positions 97–120 match the Beta-hairpin motif; sequence YYDYYQPEAYVPSSDTYIEKDSSV. Residues 435-601 enclose the Helicase C-terminal domain; that stretch reads QIDDLLGEIN…TIKKEIRDLI (167 aa). Positions 626 to 661 constitute a UVR domain; that stretch reads KDMIKKLEGQMQEAAGLLDFELAAQIRDMILEIKAM.

Belongs to the UvrB family. Forms a heterotetramer with UvrA during the search for lesions. Interacts with UvrC in an incision complex.

The protein localises to the cytoplasm. Its function is as follows. The UvrABC repair system catalyzes the recognition and processing of DNA lesions. A damage recognition complex composed of 2 UvrA and 2 UvrB subunits scans DNA for abnormalities. Upon binding of the UvrA(2)B(2) complex to a putative damaged site, the DNA wraps around one UvrB monomer. DNA wrap is dependent on ATP binding by UvrB and probably causes local melting of the DNA helix, facilitating insertion of UvrB beta-hairpin between the DNA strands. Then UvrB probes one DNA strand for the presence of a lesion. If a lesion is found the UvrA subunits dissociate and the UvrB-DNA preincision complex is formed. This complex is subsequently bound by UvrC and the second UvrB is released. If no lesion is found, the DNA wraps around the other UvrB subunit that will check the other stand for damage. In Streptococcus gordonii (strain Challis / ATCC 35105 / BCRC 15272 / CH1 / DL1 / V288), this protein is UvrABC system protein B.